The chain runs to 573 residues: MMKFSVIVPTYNSEKYITELLNSLAKQDFPKTEFEVVVVDDCSTDQTLQIVEKYRNKLNLKVSQLETNSGGPGKPRNVALKQAEGEFVLFVDSDDYINKETLKDAAAFIDEHHSDVLLIKMKGVNGRGVPQSMFKETAPEVTLLNSRIIYTLSPTKIYRTTLLKDNDIYFPEELKSAEDQLFTMKAYLNANRISVLSDKAYYYATKREGEHMSSAYVSPEDFYEVMRLIAVEILNADLEEAHKDQILAEFLNRHFSFSRTNGFSLKVKLEDQPQWINALGDFIQAVPERVDALVMSKLRPLLHYARAKDIDNYRTVEESYRQGQYYRFDIVDGKLNIQFNEGEPYFEGIDIAKPKVKMTAFKFDNHKIVTELTLNEFMIGEGHYDVRLKLHSRNKKHTMYVPLSVNANKQYRFNIMLEDIKAYLPKEKIWDVFLEVQIGTEVFEVRVGNQRNKYAYTAETSALIHLNNDFYRLTPYFTKDFNNISLYFTAITLTDSISLKLKGKNKIILTGLDRGYVFEEGMASVVLKDDMIMGMLSQTSENEVEILLSKDIKKRDFKNIVKLNTAHMTYSLK.

Residues proline 9, aspartate 41, asparagine 68, arginine 76, 92-94 (DSD), arginine 127, and glutamate 178 contribute to the UDP-N-acetyl-alpha-D-glucosamine site. Aspartate 94 is a binding site for Mn(2+). Catalysis depends on aspartate 179, which acts as the Proton acceptor. Residues arginine 207 and 211–213 (HMS) contribute to the UDP-N-acetyl-alpha-D-glucosamine site.

It belongs to the glycosyltransferase 2 family. Homotrimer. It depends on Mn(2+) as a cofactor.

The enzyme catalyses 4-O-[(D-ribitylphospho)(n)-di{(2R)-glycerylphospho}]-N-acetyl-beta-D-mannosaminyl-(1-&gt;4)-N-acetyl-alpha-D-glucosaminyl di-trans,octa-cis-undecaprenyl diphosphate + n UDP-N-acetyl-alpha-D-glucosamine = 4-O-([2-N-acetyl-beta-D-glucosaminyl-1-D-ribitylphospho](n)-di{[2R]-1-glycerylphospho})-N-acetyl-beta-D-mannosaminyl-(1-&gt;4)-N-acetyl-alpha-D-glucosaminyl di-trans,octa-cis-undecaprenyl diphosphate + n UDP + n H(+). Its pathway is cell wall biogenesis; poly(ribitol phosphate) teichoic acid biosynthesis. Attaches beta-O-GlcNAc (beta-O-N-acetyl-D-glucosamine) residues to the C4 position of poly(RboP)-wall teichoic acids (WTAs). Prefers UDP-GlcNAc as a donor substrate and is specific for poly(ribitol phosphate) WTAs. Can also use UDP-Glc and UDP-GalNAc, but not UDP-galactose or UDP-glucuronic acid. Mediates beta-lactam resistance in methicillin resistant Staphylococcus aureus (MRSA) strains. The polypeptide is Poly(ribitol-phosphate) beta-N-acetylglucosaminyltransferase TarS (Staphylococcus aureus (strain MW2)).